Consider the following 255-residue polypeptide: Type III pantothenate kinase (255 aa).

Position 6–13 (6–13 (DVGNTNTV)) interacts with ATP. Substrate is bound by residues Tyr100 and 107–110 (GADR). Asp109 functions as the Proton acceptor in the catalytic mechanism. Asp129 contributes to the K(+) binding site. An ATP-binding site is contributed by Thr132. Thr184 is a substrate binding site.

Belongs to the type III pantothenate kinase family. In terms of assembly, homodimer. It depends on NH4(+) as a cofactor. Requires K(+) as cofactor.

The protein resides in the cytoplasm. The enzyme catalyses (R)-pantothenate + ATP = (R)-4'-phosphopantothenate + ADP + H(+). It participates in cofactor biosynthesis; coenzyme A biosynthesis; CoA from (R)-pantothenate: step 1/5. Catalyzes the phosphorylation of pantothenate (Pan), the first step in CoA biosynthesis. This is Type III pantothenate kinase from Syntrophotalea carbinolica (strain DSM 2380 / NBRC 103641 / GraBd1) (Pelobacter carbinolicus).